The sequence spans 350 residues: Probable V-type proton ATPase subunit d 2 (350 aa).

The protein belongs to the V-ATPase V0D/AC39 subunit family. V-ATPase is a heteromultimeric enzyme made up of two complexes: the ATP-hydrolytic V1 complex and the proton translocation V0 complex. The V1 complex consists of three catalytic AB heterodimers that form a heterohexamer, three peripheral stalks each consisting of EG heterodimers, one central rotor including subunits D and F, and the regulatory subunits C and H. The proton translocation complex V0 consists of the proton transport subunit a, a ring of proteolipid subunits c9c'', rotary subunit d, subunits e and f, and the accessory subunits VhaAC45 and ATP6AP2.

Subunit of the V0 complex of vacuolar(H+)-ATPase (V-ATPase), a multisubunit enzyme composed of a peripheral complex (V1) that hydrolyzes ATP and a membrane integral complex (V0) that translocates protons. V-ATPase is responsible for acidifying and maintaining the pH of intracellular compartments and in some cell types, is targeted to the plasma membrane, where it is responsible for acidifying the extracellular environment. May play a role in coupling of proton transport and ATP hydrolysis. The polypeptide is Probable V-type proton ATPase subunit d 2 (VhaAC39-2) (Drosophila melanogaster (Fruit fly)).